The chain runs to 176 residues: ATP synthase subunit delta (176 aa).

The protein belongs to the ATPase delta chain family. In terms of assembly, F-type ATPases have 2 components, F(1) - the catalytic core - and F(0) - the membrane proton channel. F(1) has five subunits: alpha(3), beta(3), gamma(1), delta(1), epsilon(1). F(0) has three main subunits: a(1), b(2) and c(10-14). The alpha and beta chains form an alternating ring which encloses part of the gamma chain. F(1) is attached to F(0) by a central stalk formed by the gamma and epsilon chains, while a peripheral stalk is formed by the delta and b chains.

The protein localises to the cell inner membrane. In terms of biological role, f(1)F(0) ATP synthase produces ATP from ADP in the presence of a proton or sodium gradient. F-type ATPases consist of two structural domains, F(1) containing the extramembraneous catalytic core and F(0) containing the membrane proton channel, linked together by a central stalk and a peripheral stalk. During catalysis, ATP synthesis in the catalytic domain of F(1) is coupled via a rotary mechanism of the central stalk subunits to proton translocation. This protein is part of the stalk that links CF(0) to CF(1). It either transmits conformational changes from CF(0) to CF(1) or is implicated in proton conduction. The polypeptide is ATP synthase subunit delta (Wolinella succinogenes (strain ATCC 29543 / DSM 1740 / CCUG 13145 / JCM 31913 / LMG 7466 / NCTC 11488 / FDC 602W) (Vibrio succinogenes)).